We begin with the raw amino-acid sequence, 365 residues long: Glucose 1-dehydrogenase 1 (365 aa).

Asp-38 contacts Zn(2+). Thr-40 lines the substrate pocket. Positions 63 and 64 each coordinate Zn(2+). Substrate is bound by residues Glu-115 and Glu-151. Glu-151 lines the Zn(2+) pocket. NADP(+) contacts are provided by residues 182-185, 207-208, 272-274, and 301-303; these read NGSL, RR, LGV, and SVN. Asn-303 contributes to the substrate binding site.

Belongs to the zinc-containing alcohol dehydrogenase family. Glucose 1-dehydrogenase subfamily. The cofactor is Zn(2+).

It catalyses the reaction D-glucose + NAD(+) = D-glucono-1,5-lactone + NADH + H(+). It carries out the reaction D-glucose + NADP(+) = D-glucono-1,5-lactone + NADPH + H(+). Catalyzes the NAD(P)(+)-dependent oxidation of D-glucose to D-gluconate via gluconolactone. Can utilize both NAD(+) and NADP(+) as electron acceptor. Is involved in the degradation of glucose through a modified Entner-Doudoroff pathway. In Haloterrigena turkmenica (strain ATCC 51198 / DSM 5511 / JCM 9101 / NCIMB 13204 / VKM B-1734 / 4k) (Halococcus turkmenicus), this protein is Glucose 1-dehydrogenase 1.